A 73-amino-acid chain; its full sequence is Metallothionein-like protein type 2 (73 aa).

It belongs to the metallothionein superfamily. Type 15 family.

In terms of biological role, metallothioneins have a high content of cysteine residues that bind various heavy metals. This is Metallothionein-like protein type 2 from Solanum lycopersicum (Tomato).